Reading from the N-terminus, the 381-residue chain is 8-amino-7-oxononanoate synthase (381 aa).

Arg-27 contacts substrate. 105-106 (GY) contributes to the pyridoxal 5'-phosphate binding site. Substrate is bound at residue His-130. Residues Ser-176, 201-204 (DEAH), and 232-235 (TLSK) contribute to the pyridoxal 5'-phosphate site. Lys-235 is modified (N6-(pyridoxal phosphate)lysine). Thr-345 is a substrate binding site.

It belongs to the class-II pyridoxal-phosphate-dependent aminotransferase family. BioF subfamily. As to quaternary structure, homodimer. It depends on pyridoxal 5'-phosphate as a cofactor.

It catalyses the reaction 6-carboxyhexanoyl-[ACP] + L-alanine + H(+) = (8S)-8-amino-7-oxononanoate + holo-[ACP] + CO2. It participates in cofactor biosynthesis; biotin biosynthesis. Its function is as follows. Catalyzes the decarboxylative condensation of pimeloyl-[acyl-carrier protein] and L-alanine to produce 8-amino-7-oxononanoate (AON), [acyl-carrier protein], and carbon dioxide. The chain is 8-amino-7-oxononanoate synthase from Mycolicibacterium paratuberculosis (strain ATCC BAA-968 / K-10) (Mycobacterium paratuberculosis).